The sequence spans 80 residues: Metallothionein-like protein type 2 (80 aa).

It belongs to the metallothionein superfamily. Type 15 family.

In terms of biological role, metallothioneins have a high content of cysteine residues that bind various heavy metals. In Brassica campestris (Field mustard), this protein is Metallothionein-like protein type 2.